We begin with the raw amino-acid sequence, 327 residues long: Probable cell division protein WhiA (327 aa).

The segment at residues Ser-275–Arg-308 is a DNA-binding region (H-T-H motif).

Belongs to the WhiA family.

Functionally, involved in cell division and chromosome segregation. This chain is Probable cell division protein WhiA, found in Corynebacterium efficiens (strain DSM 44549 / YS-314 / AJ 12310 / JCM 11189 / NBRC 100395).